Here is a 156-residue protein sequence, read N- to C-terminus: Ribosomal RNA large subunit methyltransferase H (156 aa).

S-adenosyl-L-methionine is bound by residues Leu-73, Gly-104, and 123 to 128 (LSPLTL).

Belongs to the RNA methyltransferase RlmH family. In terms of assembly, homodimer.

The protein resides in the cytoplasm. The catalysed reaction is pseudouridine(1915) in 23S rRNA + S-adenosyl-L-methionine = N(3)-methylpseudouridine(1915) in 23S rRNA + S-adenosyl-L-homocysteine + H(+). Functionally, specifically methylates the pseudouridine at position 1915 (m3Psi1915) in 23S rRNA. This is Ribosomal RNA large subunit methyltransferase H from Pseudoalteromonas atlantica (strain T6c / ATCC BAA-1087).